Consider the following 510-residue polypeptide: Proline--tRNA ligase 2 (510 aa).

It belongs to the class-II aminoacyl-tRNA synthetase family. ProS type 3 subfamily. As to quaternary structure, homodimer.

The protein resides in the cytoplasm. It carries out the reaction tRNA(Pro) + L-proline + ATP = L-prolyl-tRNA(Pro) + AMP + diphosphate. Functionally, catalyzes the attachment of proline to tRNA(Pro) in a two-step reaction: proline is first activated by ATP to form Pro-AMP and then transferred to the acceptor end of tRNA(Pro). The protein is Proline--tRNA ligase 2 of Anaeromyxobacter dehalogenans (strain 2CP-C).